A 644-amino-acid chain; its full sequence is Chaperone protein DnaK (644 aa).

Position 199 is a phosphothreonine; by autocatalysis (threonine 199). Residues 603–644 (YAKKSSEGQAAQGQTQSQESTKPAEEGVVDAEFEEVKEEDKK) form a disordered region. The span at 609-623 (EGQAAQGQTQSQEST) shows a compositional bias: polar residues. A compositionally biased stretch (acidic residues) spans 629-644 (GVVDAEFEEVKEEDKK).

The protein belongs to the heat shock protein 70 family.

Its function is as follows. Acts as a chaperone. In Legionella pneumophila (strain Corby), this protein is Chaperone protein DnaK.